The chain runs to 294 residues: Foldase protein PrsA 1 (294 aa).

Residues 1–21 (MTKLKKVMISVIAATLLLLAG) form the signal peptide. Cys-22 is lipidated: N-palmitoyl cysteine. A lipid anchor (S-diacylglycerol cysteine) is attached at Cys-22. Residues 135–226 (EPDITVRHIL…YGYHLIQLVK (92 aa)) form the PpiC domain.

The protein belongs to the PrsA family.

The protein localises to the cell membrane. It catalyses the reaction [protein]-peptidylproline (omega=180) = [protein]-peptidylproline (omega=0). Its function is as follows. Plays a major role in protein secretion by helping the post-translocational extracellular folding of several secreted proteins. In Listeria monocytogenes serotype 4b (strain F2365), this protein is Foldase protein PrsA 1.